A 77-amino-acid polypeptide reads, in one-letter code: Inhibitor of histone-like protein HU (77 aa).

Interacts with host homodimeric histone-like protein (HU) hupA; thereby replacing dsDNA from the HU-DNA complex.

In terms of biological role, acts as a host growth inhibitor by inhibiting DNA-binding of microbial histone-like protein HU, thereby preventing chromosome segregation and causing filamentous cell morphology and growth defects in the host. This is Inhibitor of histone-like protein HU from Bacillus phage SP01 (Bacteriophage SP01).